The sequence spans 193 residues: Ribonuclease HII (193 aa).

The region spanning 15-193 is the RNase H type-2 domain; the sequence is YIVAGIDEAG…PYHRKSFKCC (179 aa). 3 residues coordinate a divalent metal cation: Asp21, Glu22, and Asp112.

Belongs to the RNase HII family. The cofactor is Mn(2+). Mg(2+) serves as cofactor.

The protein resides in the cytoplasm. The enzyme catalyses Endonucleolytic cleavage to 5'-phosphomonoester.. Endonuclease that specifically degrades the RNA of RNA-DNA hybrids. The protein is Ribonuclease HII of Rickettsia akari (strain Hartford).